The following is a 513-amino-acid chain: Acetylcholine receptor subunit delta (513 aa).

A signal peptide spans 1 to 18; the sequence is MAVLLALFGALVLSGGLC. At 19–244 the chain is on the extracellular side; it reads VNQEERLIHH…ITFYLIIKRK (226 aa). N-linked (GlcNAc...) asparagine glycosylation is found at Asn88 and Asn161. Cys148 and Cys162 form a disulfide bridge. 3 consecutive transmembrane segments (helical) span residues 245-269, 277-295, and 311-332; these read PLFY…VFYL, MTLV…LLVS, and YLLF…VLNF. At 333–467 the chain is on the cytoplasmic side; it reads HFRTPSTHVM…WNRVARTLDR (135 aa). Tyr388 carries the post-translational modification Phosphotyrosine; by Tyr-kinases. The helical transmembrane segment at 468–490 threads the bilayer; sequence LCLFLITPMLVVGTLWIFLMGIY.

It belongs to the ligand-gated ion channel (TC 1.A.9) family. Acetylcholine receptor (TC 1.A.9.1) subfamily. Pentamer of two alpha chains, and one each of the beta, delta, and gamma chains.

The protein resides in the postsynaptic cell membrane. It localises to the cell membrane. It catalyses the reaction K(+)(in) = K(+)(out). The catalysed reaction is Na(+)(in) = Na(+)(out). After binding acetylcholine, the AChR responds by an extensive change in conformation that affects all subunits and leads to opening of an ion-conducting channel across the plasma membrane. This is Acetylcholine receptor subunit delta (CHRND) from Gallus gallus (Chicken).